The primary structure comprises 188 residues: Dual specificity protein phosphatase 18 (188 aa).

The region spanning 19 to 160 (GLSQITKSLY…LIHYEFQLFG (142 aa)) is the Tyrosine-protein phosphatase domain. The Phosphocysteine intermediate role is filled by Cys-104.

The protein belongs to the protein-tyrosine phosphatase family. Non-receptor class dual specificity subfamily. Widely expressed with highest levels in liver, brain, ovary and testis.

It localises to the cytoplasm. It is found in the nucleus. The protein resides in the mitochondrion inner membrane. It catalyses the reaction O-phospho-L-tyrosyl-[protein] + H2O = L-tyrosyl-[protein] + phosphate. The catalysed reaction is O-phospho-L-seryl-[protein] + H2O = L-seryl-[protein] + phosphate. It carries out the reaction O-phospho-L-threonyl-[protein] + H2O = L-threonyl-[protein] + phosphate. With respect to regulation, activated by manganese ions, inhibited by iodoacetic acid. Can dephosphorylate single and diphosphorylated synthetic MAPK peptides, with preference for the phosphotyrosine and diphosphorylated forms over phosphothreonine. In vitro, dephosphorylates p-nitrophenyl phosphate (pNPP). The protein is Dual specificity protein phosphatase 18 (DUSP18) of Homo sapiens (Human).